The sequence spans 470 residues: MEEHYYVSIDIGSSSVKTIVGEKFHNGINVIGTGQTYTSGIKNGLIDDFDIARQAIKDTIKKASIASGVDIKEVFLKLPIIGTEVYDESNEIDFYEDTEINGSHIEKVLEGIREKNDVQETEVINVFPIRFIVDKENEVSDPKELIARHSLKVEAGVIAIQKSILINMIKCVEACGVDVLDVYSDAYNYGSILTATEKELGACVIDIGEDVTQVAFYERGELVDADSIEMAGRDITDDIAQGLNTSYETAEKVKHQYGHAFYDSASDQDIFTVEQVDSDETVQYTQKDLSDFIEARVEEIFFEVFDVLQDLGLTKVNGGFIVTGGSANLLGVKELLSDMVSEKVRIHTPSQMGIRKPEFSSAISTISSSIAFDELLDYVTINYHDNEETEEDVIDVKDKDNESKLGGFDWFKRKTNKKDTHENEVESTDEEIYQSEDNHQEHKQNHEHVQDKDKDKEESKFKKLMKSLFE.

A disordered region spans residues Asn416–Glu470. Residues Val425–Gln434 show a composition bias toward acidic residues. Residues Glu436–Phe461 are compositionally biased toward basic and acidic residues.

This sequence belongs to the FtsA/MreB family. In terms of assembly, self-interacts. Interacts with FtsZ.

The protein resides in the cell membrane. In terms of biological role, cell division protein that is involved in the assembly of the Z ring. May serve as a membrane anchor for the Z ring. This Staphylococcus aureus (strain NCTC 8325 / PS 47) protein is Cell division protein FtsA.